A 123-amino-acid polypeptide reads, in one-letter code: NADH-quinone oxidoreductase subunit A (123 aa).

3 helical membrane passes run 11 to 31 (YLPIAIFFGIAVLVSGLIMIL), 64 to 84 (ICFYLVAILFIIFDLEIAFLV), and 93 to 113 (IGKIGFFSMMFFLFVLIIGFI).

The protein belongs to the complex I subunit 3 family. As to quaternary structure, NDH-1 is composed of 14 different subunits. Subunits NuoA, H, J, K, L, M, N constitute the membrane sector of the complex.

It is found in the cell inner membrane. The enzyme catalyses a quinone + NADH + 5 H(+)(in) = a quinol + NAD(+) + 4 H(+)(out). In terms of biological role, NDH-1 shuttles electrons from NADH, via FMN and iron-sulfur (Fe-S) centers, to quinones in the respiratory chain. The immediate electron acceptor for the enzyme in this species is believed to be ubiquinone. Couples the redox reaction to proton translocation (for every two electrons transferred, four hydrogen ions are translocated across the cytoplasmic membrane), and thus conserves the redox energy in a proton gradient. The chain is NADH-quinone oxidoreductase subunit A from Rickettsia conorii (strain ATCC VR-613 / Malish 7).